Consider the following 210-residue polypeptide: Chaperone protein TorD (210 aa).

The protein belongs to the TorD/DmsD family. TorD subfamily.

Its subcellular location is the cytoplasm. In terms of biological role, involved in the biogenesis of TorA. Acts on TorA before the insertion of the molybdenum cofactor and, as a result, probably favors a conformation of the apoenzyme that is competent for acquiring the cofactor. The protein is Chaperone protein TorD of Salmonella paratyphi B (strain ATCC BAA-1250 / SPB7).